Reading from the N-terminus, the 637-residue chain is Early transcription factor 70 kDa subunit (637 aa).

The Helicase ATP-binding domain occupies 32–185 (RTIIDENRSV…GHIIDLMSEE (154 aa)). An ATP-binding site is contributed by 45–52 (HIMGSGKT). A DEXH box motif is present at residues 135-138 (DEAH). In terms of domain architecture, Helicase C-terminal spans 327–507 (KFKYFINRIQ…VLPFDIKKLL (181 aa)).

The protein belongs to the helicase family. VETF subfamily. Heterodimer of a 70 kDa and a 82 kDa subunit. Part of the early transcription complex composed of ETF, RAP94/OPG109, and the DNA-directed RNA polymerase.

The protein resides in the virion. Its function is as follows. Acts with RNA polymerase to initiate transcription from early gene promoters. Is recruited by the RPO-associated protein of 94 kDa RAP94/OPG109 to form the early transcription complex, which also contains the core RNA polymerase. ETF heterodimer binds to early gene promoters. The polypeptide is Early transcription factor 70 kDa subunit (OPG118) (Homo sapiens (Human)).